The chain runs to 461 residues: Glucan endo-1,3-beta-glucosidase (461 aa).

An N-terminal signal peptide occupies residues 1–23; sequence MPLLILLMLLAAGAAGAESATPS. Catalysis depends on glutamate 123, which acts as the Proton donor. Glutamate 265 acts as the Nucleophile in catalysis. The disordered stretch occupies residues 350–375; sequence GASVAPTPSPNPSPNPSPKPAPSGGG. A compositionally biased stretch (pro residues) spans 356 to 370; that stretch reads TPSPNPSPNPSPKPA. Cysteines 378 and 439 form a disulfide.

This sequence belongs to the glycosyl hydrolase 17 family. Post-translationally, contains two additional disulfide bonds.

It catalyses the reaction Hydrolysis of (1-&gt;3)-beta-D-glucosidic linkages in (1-&gt;3)-beta-D-glucans.. Functionally, is thought to be an important plant defense-related product against fungal pathogens. In Triticum aestivum (Wheat), this protein is Glucan endo-1,3-beta-glucosidase (GLC1).